Consider the following 206-residue polypeptide: Platelet glycoprotein Ib beta chain (206 aa).

The first 26 residues, 1–26, serve as a signal peptide directing secretion; that stretch reads MGSRPRGALSLLLLLLAPPSRPASGC. 2 disulfides stabilise this stretch: Cys26–Cys32 and Cys30–Cys39. The LRRNT domain occupies 27 to 55; it reads PAPCRCSETRVDCGRRGLTWASLPAAFPP. At 27-150 the chain is on the extracellular side; the sequence is PAPCRCSETR…CAPGLLCWGA (124 aa). Residues 60–83 form an LRR repeat; it reads LVLTDNNLTALPPGLLDTLPALRR. Positions 89–143 constitute an LRRCT domain; the sequence is NPWRCDCRLLPLRAWLAGRPEREFYRDLRCVAPLALRGRLLPYVAEDELRAACAP. 2 disulfide bridges follow: Cys93/Cys118 and Cys95/Cys141. The chain crosses the membrane as a helical span at residues 151-171; it reads LVAQLALLVLGLLHALLLALL. Residues 172–206 are Cytoplasmic-facing; sequence LSRLRRLRAQARARSTREFSLTAPLVAESAGGGAS. Phosphoserine is present on Ser186. At Ser191 the chain carries Phosphoserine; by PKA. Position 193 is a phosphothreonine (Thr193). A Phosphoserine modification is found at Ser200.

As to quaternary structure, two GP-Ib beta are disulfide-linked to one GP-Ib alpha. GP-IX is complexed with the GP-Ib heterodimer via a non covalent linkage. Interacts with TRAF4.

The protein resides in the membrane. Its function is as follows. Gp-Ib, a surface membrane protein of platelets, participates in the formation of platelet plugs by binding to von Willebrand factor, which is already bound to the subendothelium. This chain is Platelet glycoprotein Ib beta chain (Gp1bb), found in Rattus norvegicus (Rat).